Here is a 2352-residue protein sequence, read N- to C-terminus: Ectopic P granules protein 5 (2352 aa).

Disordered regions lie at residues 1–112 (MAEL…IFPR) and 1315–1335 (KNRE…SSAK). Basic and acidic residues predominate over residues 66-81 (DSLKREEASEPLKDVR).

The protein belongs to the EPG5 family. In terms of tissue distribution, expressed in pharyngeal and body wall muscles and intestine cells.

The protein localises to the cytoplasm. Its subcellular location is the cytoplasmic vesicle. It localises to the phagosome membrane. Involved in the maturation of autophagosomes into autolysosomes during starvation-induced autotrophy. Specifically, involved in the clearance of apoptotic cells by promoting the delivery of engulfed apoptotic cells to the lysosome. The chain is Ectopic P granules protein 5 from Caenorhabditis elegans.